Reading from the N-terminus, the 245-residue chain is tRNA pseudouridine synthase A (245 aa).

Residue aspartate 52 is the Nucleophile of the active site. Tyrosine 111 serves as a coordination point for substrate.

This sequence belongs to the tRNA pseudouridine synthase TruA family. In terms of assembly, homodimer.

It catalyses the reaction uridine(38/39/40) in tRNA = pseudouridine(38/39/40) in tRNA. Formation of pseudouridine at positions 38, 39 and 40 in the anticodon stem and loop of transfer RNAs. This Rickettsia akari (strain Hartford) protein is tRNA pseudouridine synthase A.